The sequence spans 181 residues: Adenine phosphoribosyltransferase (181 aa).

Belongs to the purine/pyrimidine phosphoribosyltransferase family. Homodimer.

It is found in the cytoplasm. The catalysed reaction is AMP + diphosphate = 5-phospho-alpha-D-ribose 1-diphosphate + adenine. It functions in the pathway purine metabolism; AMP biosynthesis via salvage pathway; AMP from adenine: step 1/1. Functionally, catalyzes a salvage reaction resulting in the formation of AMP, that is energically less costly than de novo synthesis. This is Adenine phosphoribosyltransferase from Vibrio atlanticus (strain LGP32) (Vibrio splendidus (strain Mel32)).